Reading from the N-terminus, the 695-residue chain is MASNLTFEDKIGILDPKGLRPNPLNNEPYSDDYKKLAMVWSTYPAYSAADRVLSALENYQLVFVTSSTGSGKSVLIPKLALHYTNYNGRVVMTLPKRIITLSAAIFSAKVSDVKLGESIGYAYKGSDKSMYNDQNKIIYVTDGIFVMEYVRDPLLSKFNVVIIDEAHERRIQIDLILLFLRTLLQSGNRPDLKVIIMSATIDTDKYQKYFNSVDSTVIDIAGQPNHPIETHFMDKPVTSYMKEGLELIEDLIHQQIKKDMLFFITTSNEALQLCRSIRPQYPRVYCVEVYSDMDKNLKQYAESRDKYLELGNYDQKLVMATNVAESSLTIDGLVYVIDSGYELSSRFDPECYGQILEKKFVSKAQALQRRGRVGRTEPGVCYHLLTKQQFDGLADYPTPDILRQDITMDLIKIIQVSPNKTYAEGINMMNQLMDPPLRSHINATRNLFDLYNVVDDNGILTQVGIVATQFSSLPLNRILFLIYAFELQCAREASIIVAMTEFLNGRVTNLFYKSDTICESNCEKQAANLLLEKLIQKRGDHFTYLKIYQEFSKSTDQKSWARKYGVRLDTINNIERTANQYFYRILNLLRKPRLPNNKNTLIDTSIDTPMDIQSRISSTDTKTNLLNALKKSHQHLTASKLKPTYSKENITGKISRDSVLNQIYKKNEISKKKIIYDELSNINGKWEFRTVTIIS.

A Helicase ATP-binding domain is found at 53–219 (LSALENYQLV…FNSVDSTVID (167 aa)). ATP is bound at residue 66–73 (SSTGSGKS). The DEAH box signature appears at 164-167 (DEAH). Positions 247-434 (LIEDLIHQQI…GINMMNQLMD (188 aa)) constitute a Helicase C-terminal domain.

This sequence belongs to the DEAD box helicase family. DEAH subfamily.

It localises to the virion. The enzyme catalyses ATP + H2O = ADP + phosphate + H(+). The sequence is that of Putative ATP-dependent RNA helicase L540 from Acanthamoeba polyphaga (Amoeba).